The chain runs to 542 residues: Probable quinate permease (542 aa).

The Cytoplasmic portion of the chain corresponds to 1–22 (MSILALVEDRPTPKEVYNWKIY). A helical membrane pass occupies residues 23-43 (LLAAVASFTSCMIGYDSAFIG). Residues 44–74 (TTLALSSFREEFGFSTMSKTAVNLVSANIVS) lie on the Extracellular side of the membrane. A helical transmembrane segment spans residues 75-95 (CYQAGAFFGAFFAYPIGHFWG). The Cytoplasmic segment spans residues 96-97 (RK). A helical membrane pass occupies residues 98–118 (WGLLFAGTIFTLGAGLMLGAN). Over 119 to 130 (GDRGLGLLYGGR) the chain is Extracellular. A helical membrane pass occupies residues 131–151 (VLAGLGVGAGSNITPIYISEM). Topologically, residues 152–159 (APPSIRGR) are cytoplasmic. Residues 160–180 (LVGVYELGWQIGGLVGFWINY) form a helical membrane-spanning segment. Over 181-193 (GVSETLAPSHKQW) the chain is Extracellular. The chain crosses the membrane as a helical span at residues 194–214 (IIPFAVQLIPSGLLLIGAVFL). The Cytoplasmic segment spans residues 215 to 285 (KESPRWLFSR…AGTNKKVMYR (71 aa)). The helical transmembrane segment at 286-306 (LFLGSMLFFWQNGSGINAINY) threads the bilayer. At 307–325 (YSPTVFKSIGLHGANTSMF) the chain is on the extracellular side. Residues 326-346 (STGIFGVVKTVVTFVWLLYLI) form a helical membrane-spanning segment. Topologically, residues 347–352 (DRVGRR) are cytoplasmic. Residues 353 to 373 (LLLLIGAAGAAVCLLIVGAYI) traverse the membrane as a helical segment. Topologically, residues 374-387 (KIADPASNPTQEMT) are extracellular. The chain crosses the membrane as a helical span at residues 388–408 (GGGIAAMFFFYLYTVFYTPSW). The Cytoplasmic segment spans residues 409 to 456 (NGTPWVMNSEMFEPNMRSLAQACAAASNWLWNFLISRFTPQMFAKMEY). Residues 457–477 (GVWFFFASLMLLSIVFVFFLV) form a helical membrane-spanning segment. Topologically, residues 478-542 (PETKGIPLES…EHVSEDLPKV (65 aa)) are extracellular. The tract at residues 523–542 (GYSKTGEQQVEHVSEDLPKV) is disordered. Residues 531-542 (QVEHVSEDLPKV) show a composition bias toward basic and acidic residues.

Belongs to the major facilitator superfamily. Sugar transporter (TC 2.A.1.1) family. In terms of assembly, interacts with creB. In terms of processing, ubiquitinated. Deubiquitinated by creB, probably to control its activity or amount.

It localises to the cell membrane. Its function is as follows. Integral membrane transporter that imports quinic acid to be catabolized as a carbon source. This is Probable quinate permease (qutD) from Aspergillus fumigatus (strain ATCC MYA-4609 / CBS 101355 / FGSC A1100 / Af293) (Neosartorya fumigata).